Consider the following 526-residue polypeptide: Triacylglycerol lipase OBL1 (526 aa).

A helical transmembrane segment spans residues 79–99 (GHLTDFLLNFYYQNHGFLGIL). Positions 338–342 (GHSLG) match the GXSXG motif. Residue Ser-340 is the Nucleophile of the active site. Active-site charge relay system residues include Asp-404 and His-497.

This sequence belongs to the AB hydrolase superfamily. Lipase family.

It is found in the membrane. It carries out the reaction a triacylglycerol + H2O = a diacylglycerol + a fatty acid + H(+). In terms of biological role, acid lipase that can hydrolyze a range of triacylglycerols but is not active on phospholipids. In vitro, hydrolyzes triolein, trilinolein, triricinolein, tripalmitin, trilaurin and tricaprin. May play a role in the regulation of lipolysis in germinating seeds. The sequence is that of Triacylglycerol lipase OBL1 from Ricinus communis (Castor bean).